The primary structure comprises 187 residues: Large ribosomal subunit protein uL22 (187 aa).

Belongs to the universal ribosomal protein uL22 family.

The protein is Large ribosomal subunit protein uL22 (RPL17) of Theileria annulata.